Consider the following 248-residue polypeptide: Aspartate/glutamate leucyltransferase (248 aa).

This sequence belongs to the R-transferase family. Bpt subfamily.

It is found in the cytoplasm. It catalyses the reaction N-terminal L-glutamyl-[protein] + L-leucyl-tRNA(Leu) = N-terminal L-leucyl-L-glutamyl-[protein] + tRNA(Leu) + H(+). It carries out the reaction N-terminal L-aspartyl-[protein] + L-leucyl-tRNA(Leu) = N-terminal L-leucyl-L-aspartyl-[protein] + tRNA(Leu) + H(+). Functions in the N-end rule pathway of protein degradation where it conjugates Leu from its aminoacyl-tRNA to the N-termini of proteins containing an N-terminal aspartate or glutamate. This chain is Aspartate/glutamate leucyltransferase, found in Polynucleobacter asymbioticus (strain DSM 18221 / CIP 109841 / QLW-P1DMWA-1) (Polynucleobacter necessarius subsp. asymbioticus).